The sequence spans 336 residues: N-((2S)-2-amino-2-carboxyethyl)-L-glutamate dehydrogenase (336 aa).

Catalysis depends on lysine 78, which acts as the Proton donor/acceptor. NAD(+)-binding residues include arginine 122 and lysine 242.

This sequence belongs to the ornithine cyclodeaminase/mu-crystallin family. In terms of assembly, homodimer.

The catalysed reaction is N-[(2S)-2-amino-2-carboxyethyl]-L-glutamate + NAD(+) + H2O = (S)-2,3-diaminopropanoate + 2-oxoglutarate + NADH + H(+). The protein operates within siderophore biosynthesis. Its function is as follows. Catalyzes the hydrolysis of N-((2S)-2-amino-2-carboxyethyl)-L-glutamate (ACEGA) to form L-2,3-diaminopropionic acid and 2-oxoglutarate. Involved in the biosynthesis of L-2,3-diaminopropionic acid (L-Dap), a precursor of staphyloferrin B and antibiotics. In Staphylococcus aureus (strain NCTC 8325 / PS 47), this protein is N-((2S)-2-amino-2-carboxyethyl)-L-glutamate dehydrogenase.